The sequence spans 440 residues: Suppressor of cytokine signaling 4 (440 aa).

Residues 1–10 (MAENNENISK) show a composition bias toward polar residues. The tract at residues 1-29 (MAENNENISKNVDVRPKTSRSRSADRKDG) is disordered. Residues 12 to 29 (VDVRPKTSRSRSADRKDG) are compositionally biased toward basic and acidic residues. The SH2 domain occupies 286-381 (CYWGVMDKYA…FFEPLLSTPL (96 aa)). The SOCS box domain occupies 376 to 425 (LLSTPLIRTFPFSLQHICRTVICNCTTYDGIDALPIPSSMKLYLKEYHYK).

Its pathway is protein modification; protein ubiquitination. Functionally, SOCS family proteins form part of a classical negative feedback system that regulates cytokine signal transduction. Substrate-recognition component of a SCF-like ECS (Elongin BC-CUL2/5-SOCS-box protein) E3 ubiquitin-protein ligase complex which mediates the ubiquitination and subsequent proteasomal degradation of target proteins. Inhibits EGF signaling by mediating the degradation of the Tyr-phosphorylated EGF receptor/EGFR. This Homo sapiens (Human) protein is Suppressor of cytokine signaling 4 (SOCS4).